We begin with the raw amino-acid sequence, 459 residues long: Light-independent protochlorophyllide reductase subunit N (459 aa).

[4Fe-4S] cluster-binding residues include C22, C47, and C107.

The protein belongs to the BchN/ChlN family. Protochlorophyllide reductase is composed of three subunits; ChlL, ChlN and ChlB. Forms a heterotetramer of two ChlB and two ChlN subunits. The cofactor is [4Fe-4S] cluster.

The protein localises to the plastid. It localises to the chloroplast. It catalyses the reaction chlorophyllide a + oxidized 2[4Fe-4S]-[ferredoxin] + 2 ADP + 2 phosphate = protochlorophyllide a + reduced 2[4Fe-4S]-[ferredoxin] + 2 ATP + 2 H2O. The protein operates within porphyrin-containing compound metabolism; chlorophyll biosynthesis (light-independent). Component of the dark-operative protochlorophyllide reductase (DPOR) that uses Mg-ATP and reduced ferredoxin to reduce ring D of protochlorophyllide (Pchlide) to form chlorophyllide a (Chlide). This reaction is light-independent. The NB-protein (ChlN-ChlB) is the catalytic component of the complex. This Pinus contorta (Shore pine) protein is Light-independent protochlorophyllide reductase subunit N.